Consider the following 319-residue polypeptide: Acetyl esterase (319 aa).

The Involved in the stabilization of the negatively charged intermediate by the formation of the oxyanion hole motif lies at 91–93; sequence HGG. Residues Ser-165, Asp-262, and His-292 contribute to the active site.

It belongs to the 'GDXG' lipolytic enzyme family. In terms of assembly, homodimer. Interacts with MalT and MelA.

The protein resides in the cytoplasm. Functionally, displays esterase activity towards short chain fatty esters (acyl chain length of up to 8 carbons). Able to hydrolyze triacetylglycerol (triacetin) and tributyrylglycerol (tributyrin), but not trioleylglycerol (triolein) or cholesterol oleate. Negatively regulates MalT activity by antagonizing maltotriose binding. Inhibits MelA galactosidase activity. This is Acetyl esterase from Escherichia coli O139:H28 (strain E24377A / ETEC).